A 223-amino-acid polypeptide reads, in one-letter code: Deoxyribose-phosphate aldolase (223 aa).

D92 serves as the catalytic Proton donor/acceptor. Catalysis depends on K154, which acts as the Schiff-base intermediate with acetaldehyde. K182 serves as the catalytic Proton donor/acceptor.

It belongs to the DeoC/FbaB aldolase family. DeoC type 1 subfamily.

The protein resides in the cytoplasm. It catalyses the reaction 2-deoxy-D-ribose 5-phosphate = D-glyceraldehyde 3-phosphate + acetaldehyde. Its pathway is carbohydrate degradation; 2-deoxy-D-ribose 1-phosphate degradation; D-glyceraldehyde 3-phosphate and acetaldehyde from 2-deoxy-alpha-D-ribose 1-phosphate: step 2/2. Functionally, catalyzes a reversible aldol reaction between acetaldehyde and D-glyceraldehyde 3-phosphate to generate 2-deoxy-D-ribose 5-phosphate. This is Deoxyribose-phosphate aldolase from Pasteurella multocida (strain Pm70).